We begin with the raw amino-acid sequence, 348 residues long: Zinc finger protein 843 (348 aa).

The C2H2-type 1 zinc finger occupies 33–55 (CKCKACGRGFTQSASLLQHWRVH). Residues 145 to 167 (FCCCSCGDSVNEKTSLSQRVLPH) form a C2H2-type 2; degenerate zinc finger. Positions 184-195 (APSSVAPDSTSG) are enriched in polar residues. Disordered regions lie at residues 184–203 (APSS…GSPG) and 256–329 (ATQP…WRGA).

The polypeptide is Zinc finger protein 843 (ZNF843) (Homo sapiens (Human)).